A 308-amino-acid chain; its full sequence is Ribonuclease Z (308 aa).

Zn(2+) is bound by residues His60, His62, Asp64, His65, His140, Asp209, and His269. Residue Asp64 is the Proton acceptor of the active site.

Belongs to the RNase Z family. Homodimer. Requires Zn(2+) as cofactor.

It catalyses the reaction Endonucleolytic cleavage of RNA, removing extra 3' nucleotides from tRNA precursor, generating 3' termini of tRNAs. A 3'-hydroxy group is left at the tRNA terminus and a 5'-phosphoryl group is left at the trailer molecule.. Zinc phosphodiesterase, which displays some tRNA 3'-processing endonuclease activity. Probably involved in tRNA maturation, by removing a 3'-trailer from precursor tRNA. This Methanococcus maripaludis (strain C6 / ATCC BAA-1332) protein is Ribonuclease Z.